Here is a 95-residue protein sequence, read N- to C-terminus: Co-chaperonin GroES (95 aa).

Belongs to the GroES chaperonin family. In terms of assembly, heptamer of 7 subunits arranged in a ring. Interacts with the chaperonin GroEL.

It is found in the cytoplasm. Functionally, together with the chaperonin GroEL, plays an essential role in assisting protein folding. The GroEL-GroES system forms a nano-cage that allows encapsulation of the non-native substrate proteins and provides a physical environment optimized to promote and accelerate protein folding. GroES binds to the apical surface of the GroEL ring, thereby capping the opening of the GroEL channel. This is Co-chaperonin GroES from Lachnoclostridium phytofermentans (strain ATCC 700394 / DSM 18823 / ISDg) (Clostridium phytofermentans).